We begin with the raw amino-acid sequence, 450 residues long: Probable ECA polymerase (450 aa).

11 consecutive transmembrane segments (helical) span residues 6 to 26 (FSGL…LTWF), 37 to 57 (VFFS…TSVL), 63 to 83 (VGVA…CFYA), 118 to 138 (VILM…NGFL), 155 to 175 (GVAL…VYFL), 181 to 201 (AWLF…MIVG), 207 to 227 (IIIA…ISLW), 228 to 248 (MLAA…LKRY), 341 to 361 (LVVM…GLII), 378 to 398 (YKAA…IVLA), and 410 to 430 (VFFI…YWLF).

The protein belongs to the WzyE family. Probably part of a complex composed of WzxE, WzyE and WzzE.

It localises to the cell inner membrane. It functions in the pathway bacterial outer membrane biogenesis; enterobacterial common antigen biosynthesis. Probably involved in the polymerization of enterobacterial common antigen (ECA) trisaccharide repeat units. This chain is Probable ECA polymerase, found in Escherichia coli O127:H6 (strain E2348/69 / EPEC).